A 259-amino-acid polypeptide reads, in one-letter code: Tryptophan synthase alpha chain (259 aa).

Catalysis depends on proton acceptor residues Glu52 and Asp63.

Belongs to the TrpA family. Tetramer of two alpha and two beta chains.

It carries out the reaction (1S,2R)-1-C-(indol-3-yl)glycerol 3-phosphate + L-serine = D-glyceraldehyde 3-phosphate + L-tryptophan + H2O. It participates in amino-acid biosynthesis; L-tryptophan biosynthesis; L-tryptophan from chorismate: step 5/5. The alpha subunit is responsible for the aldol cleavage of indoleglycerol phosphate to indole and glyceraldehyde 3-phosphate. This chain is Tryptophan synthase alpha chain, found in Streptococcus sanguinis (strain SK36).